A 177-amino-acid polypeptide reads, in one-letter code: Adenine phosphoribosyltransferase (177 aa).

The protein belongs to the purine/pyrimidine phosphoribosyltransferase family. In terms of assembly, homodimer.

The protein localises to the cytoplasm. It catalyses the reaction AMP + diphosphate = 5-phospho-alpha-D-ribose 1-diphosphate + adenine. It participates in purine metabolism; AMP biosynthesis via salvage pathway; AMP from adenine: step 1/1. Functionally, catalyzes a salvage reaction resulting in the formation of AMP, that is energically less costly than de novo synthesis. This Acidothermus cellulolyticus (strain ATCC 43068 / DSM 8971 / 11B) protein is Adenine phosphoribosyltransferase.